A 489-amino-acid chain; its full sequence is Glycogen synthase (489 aa).

ADP-alpha-D-glucose is bound at residue arginine 20.

It belongs to the glycosyltransferase 1 family. Bacterial/plant glycogen synthase subfamily.

The enzyme catalyses [(1-&gt;4)-alpha-D-glucosyl](n) + ADP-alpha-D-glucose = [(1-&gt;4)-alpha-D-glucosyl](n+1) + ADP + H(+). It participates in glycan biosynthesis; glycogen biosynthesis. Functionally, synthesizes alpha-1,4-glucan chains using ADP-glucose. The chain is Glycogen synthase from Pelodictyon phaeoclathratiforme (strain DSM 5477 / BU-1).